The sequence spans 911 residues: Protein transport protein SEC24-1 (911 aa).

Residues 108 to 123 (QPLPQQQQQQQQQQGP) are compositionally biased toward low complexity. Residues 108-130 (QPLPQQQQQQQQQQGPAKPPKPM) are disordered. Residues C226, C229, C248, and C251 each coordinate Zn(2+). Positions 226-251 (CRRCRSYMNPFVHFNQDGRRWKCNIC) are zinc finger-like.

Belongs to the SEC23/SEC24 family. SEC24 subfamily. As to quaternary structure, the COPII coat is composed of at least 5 proteins: the SEC23/24 complex, the SEC13/31 complex, and the protein SAR1. Golgi apparatus membrane; Peripheral membrane protein; Cytoplasmic side.

It localises to the cytoplasm. Its subcellular location is the cytoplasmic vesicle. The protein resides in the COPII-coated vesicle membrane. It is found in the endoplasmic reticulum membrane. The protein localises to the golgi apparatus membrane. In terms of biological role, component of the coat protein complex II (COPII) which promotes the formation of transport vesicles from the endoplasmic reticulum (ER). The coat has two main functions, the physical deformation of the endoplasmic reticulum membrane into vesicles and the selection of cargo molecules. This is Protein transport protein SEC24-1 (SEC241) from Naumovozyma castellii (Yeast).